Reading from the N-terminus, the 241-residue chain is DNA repair protein RecO (241 aa).

This sequence belongs to the RecO family.

Involved in DNA repair and RecF pathway recombination. This Rickettsia canadensis (strain McKiel) protein is DNA repair protein RecO.